Reading from the N-terminus, the 528-residue chain is Serine/threonine-protein kinase akt-2 (528 aa).

Residues 12–115 (DIVIESWLHK…WIEAIQAVSS (104 aa)) enclose the PH domain. The tract at residues 121-153 (ENAGNTSMQEEDTNGNPSGESDVNMDATSTRSD) is disordered. Polar residues predominate over residues 123 to 153 (AGNTSMQEEDTNGNPSGESDVNMDATSTRSD). In terms of domain architecture, Protein kinase spans 180 to 437 (FDFLKVLGQG…AREVSRAEFF (258 aa)). ATP contacts are provided by residues 186-194 (LGQGTFGKV) and lysine 209. Residue aspartate 303 is the Proton acceptor of the active site. In terms of domain architecture, AGC-kinase C-terminal spans 438-515 (KDVDWEATLR…YYVSGSLERS (78 aa)).

Belongs to the protein kinase superfamily. AGC Ser/Thr protein kinase family. RAC subfamily. Interacts with pdk-1, sgk-1, akt-1 and daf-16. Part of a complex containing sgk-1, akt-1 and akt-2. Mg(2+) serves as cofactor. Expressed in neurons, muscle cells of the pharynx, rectal gland cells, and spermatheca.

It catalyses the reaction L-seryl-[protein] + ATP = O-phospho-L-seryl-[protein] + ADP + H(+). It carries out the reaction L-threonyl-[protein] + ATP = O-phospho-L-threonyl-[protein] + ADP + H(+). Phosphorylated and activated by pdk-1. Acts downstream of PI3 kinase age-1 and kinase pdk-1 in the daf-2/insulin receptor-like transduction pathway. Essential role in regulating developmental arrest at the dauer stage. Phosphorylates Forkhead-related daf-16 and the longevity-promoting skn-1 transcription factors, which inhibits their entry into the nucleus and antagonizes their functions. Role in immune function and pathogen resistance. Downstream of age-1 and together with akt-1 and sgk-1, promotes cell survival during embryonic development. Plays a role in maintaining the gonadal basement membrane through antagonizing akt-1 activity. In Caenorhabditis elegans, this protein is Serine/threonine-protein kinase akt-2.